The chain runs to 295 residues: Release factor glutamine methyltransferase (295 aa).

Residues Gly127–Gly131, Asp150, Phe179, and Asn195 each bind S-adenosyl-L-methionine. Asn195–Tyr198 lines the substrate pocket.

The protein belongs to the protein N5-glutamine methyltransferase family. PrmC subfamily.

It catalyses the reaction L-glutaminyl-[peptide chain release factor] + S-adenosyl-L-methionine = N(5)-methyl-L-glutaminyl-[peptide chain release factor] + S-adenosyl-L-homocysteine + H(+). Functionally, methylates the class 1 translation termination release factors RF1/PrfA and RF2/PrfB on the glutamine residue of the universally conserved GGQ motif. This is Release factor glutamine methyltransferase from Nitratidesulfovibrio vulgaris (strain ATCC 29579 / DSM 644 / CCUG 34227 / NCIMB 8303 / VKM B-1760 / Hildenborough) (Desulfovibrio vulgaris).